Consider the following 501-residue polypeptide: Mitochondrial inner membrane i-AAA protease supercomplex subunit MGR3 (501 aa).

Residues Met1–Arg77 lie on the Mitochondrial matrix side of the membrane. The tract at residues Arg39–Leu72 is disordered. Residues Ser78–Phe95 traverse the membrane as a helical segment. Topologically, residues Lys96–Asn501 are mitochondrial intermembrane. 4 TPR repeats span residues Gln109–Ser144, Thr154–Ala187, Gly386–Asn420, and Ala440–Thr473.

The protein belongs to the MGR3 family. In terms of assembly, component of the mitochondrial inner membrane i-AAA protease supercomplex composed of MGR1, MGR3 and YME1. With MGR1, forms a subcomplex that binds to YME1 and to substrates to facilitate proteolysis.

It is found in the mitochondrion inner membrane. Its function is as follows. Component of the mitochondrial inner membrane i-AAA protease supercomplex, which degrades misfolded mitochondrial proteins. Together with MGR1, functions in an adapter complex that targets substrates to the i-AAA protease for degradation. Required for growth of cells lacking the mitochondrial genome. This chain is Mitochondrial inner membrane i-AAA protease supercomplex subunit MGR3 (MGR3), found in Saccharomyces cerevisiae (strain ATCC 204508 / S288c) (Baker's yeast).